Reading from the N-terminus, the 250-residue chain is UPF0524 protein C3orf70 homolog (250 aa).

The interval 201 to 250 (ESCDEDTEEGAELSSEEDYSPESSWEPDECTLLSPSQSDLEVIETIETTV) is disordered. The segment covering 202–229 (SCDEDTEEGAELSSEEDYSPESSWEPDE) has biased composition (acidic residues).

It belongs to the UPF0524 family.

In terms of biological role, may play a role in neuronal and neurobehavioral development. The protein is UPF0524 protein C3orf70 homolog of Bos taurus (Bovine).